Here is a 640-residue protein sequence, read N- to C-terminus: Dextranase (640 aa).

A signal peptide spans Met1–Ala32.

This sequence belongs to the glycosyl hydrolase 49 family.

It is found in the secreted. It carries out the reaction Endohydrolysis of (1-&gt;6)-alpha-D-glucosidic linkages in dextran.. In Arthrobacter globiformis, this protein is Dextranase.